The sequence spans 185 residues: Large ribosomal subunit protein uL18 (185 aa).

Belongs to the universal ribosomal protein uL18 family. Part of the 50S ribosomal subunit. Contacts the 5S and 23S rRNAs.

Functionally, this is one of the proteins that bind and probably mediate the attachment of the 5S RNA into the large ribosomal subunit, where it forms part of the central protuberance. This chain is Large ribosomal subunit protein uL18, found in Halorubrum lacusprofundi (strain ATCC 49239 / DSM 5036 / JCM 8891 / ACAM 34).